A 470-amino-acid polypeptide reads, in one-letter code: Siroheme synthase (470 aa).

Residues 1–203 form a precorrin-2 dehydrogenase /sirohydrochlorin ferrochelatase region; that stretch reads MDYLPIFVEL…GQIQQAEKQL (203 aa). NAD(+)-binding positions include 22–23 and 43–44; these read EV and PE. Position 128 is a phosphoserine (Ser-128). Residues 214–470 are uroporphyrinogen-III C-methyltransferase; that stretch reads GELALVGAGP…ISRPAVVDFA (257 aa). Pro-223 contacts S-adenosyl-L-methionine. Asp-246 (proton acceptor) is an active-site residue. The active-site Proton donor is Lys-268. Residues 299 to 301, Ile-304, 329 to 330, Met-381, and Gly-410 each bind S-adenosyl-L-methionine; these read GGD and TA.

The protein in the N-terminal section; belongs to the precorrin-2 dehydrogenase / sirohydrochlorin ferrochelatase family. It in the C-terminal section; belongs to the precorrin methyltransferase family.

The catalysed reaction is uroporphyrinogen III + 2 S-adenosyl-L-methionine = precorrin-2 + 2 S-adenosyl-L-homocysteine + H(+). It catalyses the reaction precorrin-2 + NAD(+) = sirohydrochlorin + NADH + 2 H(+). It carries out the reaction siroheme + 2 H(+) = sirohydrochlorin + Fe(2+). It participates in cofactor biosynthesis; adenosylcobalamin biosynthesis; precorrin-2 from uroporphyrinogen III: step 1/1. Its pathway is cofactor biosynthesis; adenosylcobalamin biosynthesis; sirohydrochlorin from precorrin-2: step 1/1. The protein operates within porphyrin-containing compound metabolism; siroheme biosynthesis; precorrin-2 from uroporphyrinogen III: step 1/1. It functions in the pathway porphyrin-containing compound metabolism; siroheme biosynthesis; siroheme from sirohydrochlorin: step 1/1. It participates in porphyrin-containing compound metabolism; siroheme biosynthesis; sirohydrochlorin from precorrin-2: step 1/1. Functionally, multifunctional enzyme that catalyzes the SAM-dependent methylations of uroporphyrinogen III at position C-2 and C-7 to form precorrin-2 via precorrin-1. Then it catalyzes the NAD-dependent ring dehydrogenation of precorrin-2 to yield sirohydrochlorin. Finally, it catalyzes the ferrochelation of sirohydrochlorin to yield siroheme. The protein is Siroheme synthase of Photorhabdus laumondii subsp. laumondii (strain DSM 15139 / CIP 105565 / TT01) (Photorhabdus luminescens subsp. laumondii).